A 228-amino-acid polypeptide reads, in one-letter code: uncharacterized protein (228 aa).

S-adenosyl-L-methionine is bound by residues Gly-179, Ile-199, and Leu-208.

The protein belongs to the class IV-like SAM-binding methyltransferase superfamily. RNA methyltransferase TrmH family.

This is an uncharacterized protein from Borreliella burgdorferi (strain ATCC 35210 / DSM 4680 / CIP 102532 / B31) (Borrelia burgdorferi).